The following is a 199-amino-acid chain: Putative pseudouridine methyltransferase (199 aa).

The S-adenosyl-L-methionine site is built by Leu-132 and Cys-186.

It belongs to the methyltransferase superfamily. TrmY family.

The protein resides in the cytoplasm. The protein is Putative pseudouridine methyltransferase of Vibrio campbellii (strain ATCC BAA-1116).